The sequence spans 199 residues: Pneumococcal vaccine antigen A homolog (199 aa).

The protein resides in the cell surface. The protein is Pneumococcal vaccine antigen A homolog (pvaA) of Streptococcus pyogenes serotype M6 (strain ATCC BAA-946 / MGAS10394).